The primary structure comprises 367 residues: Anthranilate phosphoribosyltransferase (367 aa).

A compositionally biased stretch (low complexity) spans 1 to 17 (MVLSSEASSAADHSAAA). The disordered stretch occupies residues 1 to 22 (MVLSSEASSAADHSAAAPIPTS). 5-phospho-alpha-D-ribose 1-diphosphate contacts are provided by residues Gly104, 107-108 (GD), Thr112, 114-117 (NLST), 132-140 (KHGNRAASS), and Gly144. Position 104 (Gly104) interacts with anthranilate. Ser116 lines the Mg(2+) pocket. Asn135 provides a ligand contact to anthranilate. Arg190 serves as a coordination point for anthranilate. Mg(2+) contacts are provided by Asp248 and Glu249.

The protein belongs to the anthranilate phosphoribosyltransferase family. In terms of assembly, homodimer. The cofactor is Mg(2+).

The enzyme catalyses N-(5-phospho-beta-D-ribosyl)anthranilate + diphosphate = 5-phospho-alpha-D-ribose 1-diphosphate + anthranilate. The protein operates within amino-acid biosynthesis; L-tryptophan biosynthesis; L-tryptophan from chorismate: step 2/5. In terms of biological role, catalyzes the transfer of the phosphoribosyl group of 5-phosphorylribose-1-pyrophosphate (PRPP) to anthranilate to yield N-(5'-phosphoribosyl)-anthranilate (PRA). The sequence is that of Anthranilate phosphoribosyltransferase from Mycobacterium ulcerans (strain Agy99).